Consider the following 402-residue polypeptide: Multidrug resistance protein MdtH (402 aa).

Residues 1–12 (MSRVSQARNLGK) are Cytoplasmic-facing. A helical transmembrane segment spans residues 13–33 (YFLLIDNMLVVLGFFVVFPLI). At 34 to 98 (SIRFVDQMGW…GFATMGIAHE (65 aa)) the chain is on the periplasmic side. The helical transmembrane segment at 99–116 (PWLLWFSCFLSGLGGTLF) threads the bilayer. At 117-138 (DPPRSALVVKLIRPEQRGRFFS) the chain is on the cytoplasmic side. Residues 139–159 (LLMMQDSAGAVIGALLGSWLL) traverse the membrane as a helical segment. Residues 160 to 164 (QYDFR) lie on the Periplasmic side of the membrane. A helical transmembrane segment spans residues 165 to 185 (LVCATGAILFILCALFNAWLL). At 186 to 213 (PAWKLSTVRTPVREGMRRVMSDKRFVTY) the chain is on the cytoplasmic side. Residues 214–234 (VLTLAGYYMLAVQVMLMLPIM) form a helical membrane-spanning segment. Topologically, residues 235-243 (VNDIAGSPA) are periplasmic. Residues 244–264 (AVKWMYAIEACLSLTLLYPIA) form a helical membrane-spanning segment. The Cytoplasmic portion of the chain corresponds to 265-276 (RWSEKRFRLEHR). The helical transmembrane segment at 277–297 (LMAGLLVMSLSMIPIGMVGNL) threads the bilayer. The Periplasmic segment spans residues 298 to 299 (QQ). A helical transmembrane segment spans residues 300 to 320 (LFTLICAFYIGSVIAEPARET). Over 321-339 (LSASLADARARGSYMGFSR) the chain is Cytoplasmic. The chain crosses the membrane as a helical span at residues 340–360 (LGLAIGGAIGYIGGGWLFDMG). The Periplasmic segment spans residues 361 to 367 (KALAQPE). A helical membrane pass occupies residues 368–388 (LPWMMLGIIGFITFLALGWQF). Residues 389–402 (SHKRTPRRMLEPGA) lie on the Cytoplasmic side of the membrane.

This sequence belongs to the major facilitator superfamily. DHA1 family. MdtH (TC 2.A.1.2.21) subfamily.

The protein resides in the cell inner membrane. This Salmonella schwarzengrund (strain CVM19633) protein is Multidrug resistance protein MdtH.